The sequence spans 737 residues: Zinc finger protein 184 (737 aa).

The 72-residue stretch at 28-99 (VTFKDVVVNF…DSCIPVGPLE (72 aa)) folds into the KRAB domain. Position 117 is a phosphoserine (serine 117). Lysine 185 is covalently cross-linked (Glycyl lysine isopeptide (Lys-Gly) (interchain with G-Cter in SUMO2)). 17 C2H2-type zinc fingers span residues 201–223 (CKCN…QRTH), 229–251 (YKCN…QRIH), 257–279 (YKCD…QRIH), 285–307 (YKCD…QRIH), 313–335 (YTCT…QKIH), 341–363 (FKCE…QKIH), 369–391 (YKCN…HMIH), 397–419 (YECN…QKTH), 425–447 (YDCA…LKIH), 453–475 (YKCS…RRIH), 481–503 (FECS…QKTH), 509–531 (YECK…ERIH), 537–559 (YQCH…KKIH), 565–587 (YKCN…KRIH), 593–615 (YACP…QKTH), 621–643 (YQCN…QRIH), and 649–671 (YKCS…RSTH). The C2H2-type 18; degenerate zinc-finger motif lies at 677–698 (YNSECPQTFSQSTYLTQHQKIH). Residues 704–726 (LGCEDCEKAFQCHSALTKHQRLH) form a C2H2-type 19 zinc finger.

This sequence belongs to the krueppel C2H2-type zinc-finger protein family.

The protein localises to the nucleus. Its function is as follows. May be involved in transcriptional regulation. The sequence is that of Zinc finger protein 184 (Zfp184) from Mus musculus (Mouse).